The chain runs to 155 residues: MKIWVDADSCPVRIRQITAKAGERLKLPVIFAANREIPVPKGASMVVTENTEQAADLYITENSVEGDLAITRDIPLAKLLVDKGLYVINDRGTIFTRDNINTYLSARNFMYELQANGLAPEKTNSFGKKEIQKFSNLLDSLLAKALKQRHLDSRF.

The protein belongs to the UPF0178 family.

The protein is UPF0178 protein TDE_2151 of Treponema denticola (strain ATCC 35405 / DSM 14222 / CIP 103919 / JCM 8153 / KCTC 15104).